Consider the following 158-residue polypeptide: Endoribonuclease YbeY (158 aa).

Positions 120, 124, and 130 each coordinate Zn(2+).

Belongs to the endoribonuclease YbeY family. Zn(2+) is required as a cofactor.

It is found in the cytoplasm. Functionally, single strand-specific metallo-endoribonuclease involved in late-stage 70S ribosome quality control and in maturation of the 3' terminus of the 16S rRNA. The chain is Endoribonuclease YbeY from Spiroplasma citri.